Here is an 86-residue protein sequence, read N- to C-terminus: RNA-binding protein Hfq (86 aa).

The 61-residue stretch at 9–69 (DRFLNILRTS…VSTIMPESFV (61 aa)) folds into the Sm domain.

The protein belongs to the Hfq family. As to quaternary structure, homohexamer.

Its function is as follows. RNA chaperone that binds small regulatory RNA (sRNAs) and mRNAs to facilitate mRNA translational regulation in response to envelope stress, environmental stress and changes in metabolite concentrations. Also binds with high specificity to tRNAs. The chain is RNA-binding protein Hfq from Thermosipho melanesiensis (strain DSM 12029 / CIP 104789 / BI429).